We begin with the raw amino-acid sequence, 333 residues long: MLTLTRIHTVSYEVRSTFLFISVLEFAVGFLTNAFVFLVNFWDVVKRQPLSNSDCVLLCLSISRLFLHGLLFLSAIQLTHFQKLSEPLNHSYQAINMLWMIANQANLWLAACLSLLYCSKLIRFSHTFLICLASWVSRKISQMLLGIILCSCICTVLCVWCFFSRPHFTVTTVLFMNNNTRLNWQIKDLNLFYSFLFCYLWSVPPFLLFLVSSGMLTVSLGRHMRTMKVYTRDSRDPSLEAHIKALKSLVSFFCFFVISSCAAFISVPLLILWRDKIGVMVCVGIMAACPSGHAAVLISGNAKLRRAVTTILLWAQSSLKVRADHKADSRTLC.

Topologically, residues 1-17 (MLTLTRIHTVSYEVRST) are extracellular. A helical membrane pass occupies residues 18–38 (FLFISVLEFAVGFLTNAFVFL). Topologically, residues 39-55 (VNFWDVVKRQPLSNSDC) are cytoplasmic. A helical transmembrane segment spans residues 56–76 (VLLCLSISRLFLHGLLFLSAI). At 77–94 (QLTHFQKLSEPLNHSYQA) the chain is on the extracellular side. The helical transmembrane segment at 95 to 115 (INMLWMIANQANLWLAACLSL) threads the bilayer. The Cytoplasmic portion of the chain corresponds to 116-142 (LYCSKLIRFSHTFLICLASWVSRKISQ). A helical membrane pass occupies residues 143-163 (MLLGIILCSCICTVLCVWCFF). The Extracellular segment spans residues 164–190 (SRPHFTVTTVLFMNNNTRLNWQIKDLN). N-linked (GlcNAc...) asparagine glycosylation is present at Asn-178. A helical membrane pass occupies residues 191-211 (LFYSFLFCYLWSVPPFLLFLV). At 212–251 (SSGMLTVSLGRHMRTMKVYTRDSRDPSLEAHIKALKSLVS) the chain is on the cytoplasmic side. A helical transmembrane segment spans residues 252-272 (FFCFFVISSCAAFISVPLLIL). Residues 273 to 276 (WRDK) lie on the Extracellular side of the membrane. Residues 277 to 297 (IGVMVCVGIMAACPSGHAAVL) form a helical membrane-spanning segment. The Cytoplasmic portion of the chain corresponds to 298 to 333 (ISGNAKLRRAVTTILLWAQSSLKVRADHKADSRTLC).

The protein belongs to the G-protein coupled receptor T2R family.

The protein resides in the membrane. Its function is as follows. Receptor that may play a role in the perception of bitterness and is gustducin-linked. May play a role in sensing the chemical composition of the gastrointestinal content. The activity of this receptor may stimulate alpha gustducin, mediate PLC-beta-2 activation and lead to the gating of TRPM5. This chain is Taste receptor type 2 member 38 (TAS2R38), found in Pan paniscus (Pygmy chimpanzee).